Here is a 197-residue protein sequence, read N- to C-terminus: Ribosomal RNA large subunit methyltransferase E (197 aa).

Positions 50, 52, 70, 88, and 111 each coordinate S-adenosyl-L-methionine. K151 (proton acceptor) is an active-site residue.

Belongs to the class I-like SAM-binding methyltransferase superfamily. RNA methyltransferase RlmE family.

It is found in the cytoplasm. It carries out the reaction uridine(2552) in 23S rRNA + S-adenosyl-L-methionine = 2'-O-methyluridine(2552) in 23S rRNA + S-adenosyl-L-homocysteine + H(+). Specifically methylates the uridine in position 2552 of 23S rRNA at the 2'-O position of the ribose in the fully assembled 50S ribosomal subunit. In Syntrophobacter fumaroxidans (strain DSM 10017 / MPOB), this protein is Ribosomal RNA large subunit methyltransferase E.